We begin with the raw amino-acid sequence, 486 residues long: MADSSCGKKSTKCPHCSSASQKNALCICSCKTKLSPMSVVEMSQTSSTGSSEFIVSPEKRKEKGASKDVTSGKDSPSKSSNIERKPSQQQWGRGNFTEGKVPHIRMDNGAALQEIYTFGRILGQGSFGMVIEAIDKERETKWAIKKVNKEKAGSSAVKLLEREVDILKSVKHEHIIHLEQVFETPKKMYLVMELCEDGELKEILERKGHFSENETRWIIQSLASAIAYLHNKDIVHRDLKLENIMVKSSFIDANNEMNLNIKVTDFGLAVKKHGRSEVMLQTTCGTPIYMAPEVINAHDYSQQCDIWSIGVIMYILLCGKAPFMASSEEKLFELIKKGELHFKNSIWNSISDCAKSVLKQLMKVDPAHRITAKELLDNQWLTGNTVSSARPTNVLEMMKEWKNNPESDEESTTDQRDSRSGQEESKVYQPSRNVPDVSNSSDEEEGKQVGRTNKTCRKNNCFISPNCEIPSQHLEHFCNSFFVVGL.

The interval 39–100 is disordered; that stretch reads VVEMSQTSST…WGRGNFTEGK (62 aa). The segment covering 41–53 has biased composition (polar residues); it reads EMSQTSSTGSSEF. Residues 57–66 are compositionally biased toward basic and acidic residues; that stretch reads PEKRKEKGAS. Residues 68-80 show a composition bias toward polar residues; sequence DVTSGKDSPSKSS. Residues 116–381 enclose the Protein kinase domain; that stretch reads YTFGRILGQG…AKELLDNQWL (266 aa). Residues 122–130 and Lys145 each bind ATP; that span reads LGQGSFGMV. The Proton acceptor role is filled by Asp238. Residues 402-451 are disordered; that stretch reads KNNPESDEESTTDQRDSRSGQEESKVYQPSRNVPDVSNSSDEEEGKQVGR. A Phosphoserine modification is found at Ser407. The span at 413–426 shows a compositional bias: basic and acidic residues; it reads TDQRDSRSGQEESK. Residues 428-440 are compositionally biased toward polar residues; that stretch reads YQPSRNVPDVSNS.

It belongs to the protein kinase superfamily. CAMK Ser/Thr protein kinase family. CaMK subfamily. Interacts with vimentin/VIM. Autophosphorylated.

It localises to the cytoplasm. Its subcellular location is the perinuclear region. The enzyme catalyses L-seryl-[protein] + ATP = O-phospho-L-seryl-[protein] + ADP + H(+). It carries out the reaction L-threonyl-[protein] + ATP = O-phospho-L-threonyl-[protein] + ADP + H(+). In terms of biological role, serine/threonine protein kinase which phosphorylates vimentin/VIM. Therefore may play a specific role in the dynamic behavior of the intermediate filament cytoskeleton. This is Serine/threonine-protein kinase 33 (STK33) from Bos taurus (Bovine).